The primary structure comprises 325 residues: Delta(1)-pyrroline-2-carboxylate reductase (325 aa).

The protein belongs to the ornithine cyclodeaminase/mu-crystallin family.

It carries out the reaction L-proline + NAD(+) = 1-pyrroline-2-carboxylate + NADH + H(+). It catalyses the reaction L-proline + NADP(+) = 1-pyrroline-2-carboxylate + NADPH + H(+). Its function is as follows. Catalyzes the reduction of Delta(1)-pyrroline-2-carboxylate (Pyr2C) to L-proline, using preferentially NADPH over NADH as the electron donor. May be involved in a degradation pathway that converts trans-3-hydroxy-L-proline (t3LHyp) to L-proline. The chain is Delta(1)-pyrroline-2-carboxylate reductase from Bacillus cereus (strain ZK / E33L).